The primary structure comprises 397 residues: Elongation factor Tu (397 aa).

A tr-type G domain is found at 10 to 207 (KPHVNVGTIG…TLDAYIPEPE (198 aa)). The interval 19–26 (GHVDHGKT) is G1. 19–26 (GHVDHGKT) contributes to the GTP binding site. Mg(2+) is bound at residue Thr26. Positions 60 to 64 (GITIA) are G2. Residues 81-84 (DCPG) are G3. Residues 81 to 85 (DCPGH) and 136 to 139 (NKAD) each bind GTP. The interval 136 to 139 (NKAD) is G4. A G5 region spans residues 174 to 176 (SAL).

The protein belongs to the TRAFAC class translation factor GTPase superfamily. Classic translation factor GTPase family. EF-Tu/EF-1A subfamily. Monomer.

It localises to the cytoplasm. It catalyses the reaction GTP + H2O = GDP + phosphate + H(+). GTP hydrolase that promotes the GTP-dependent binding of aminoacyl-tRNA to the A-site of ribosomes during protein biosynthesis. This is Elongation factor Tu from Hahella chejuensis (strain KCTC 2396).